A 189-amino-acid polypeptide reads, in one-letter code: Pyridoxal 5'-phosphate synthase subunit PdxT (189 aa).

L-glutamine is bound at residue 46 to 48 (GES). The Nucleophile role is filled by Cys-78. L-glutamine is bound by residues Arg-107 and 136–137 (IR). Active-site charge relay system residues include His-173 and Glu-175.

The protein belongs to the glutaminase PdxT/SNO family. As to quaternary structure, in the presence of PdxS, forms a dodecamer of heterodimers. Only shows activity in the heterodimer.

It catalyses the reaction aldehydo-D-ribose 5-phosphate + D-glyceraldehyde 3-phosphate + L-glutamine = pyridoxal 5'-phosphate + L-glutamate + phosphate + 3 H2O + H(+). The catalysed reaction is L-glutamine + H2O = L-glutamate + NH4(+). The protein operates within cofactor biosynthesis; pyridoxal 5'-phosphate biosynthesis. Catalyzes the hydrolysis of glutamine to glutamate and ammonia as part of the biosynthesis of pyridoxal 5'-phosphate. The resulting ammonia molecule is channeled to the active site of PdxS. In Roseiflexus castenholzii (strain DSM 13941 / HLO8), this protein is Pyridoxal 5'-phosphate synthase subunit PdxT.